Consider the following 144-residue polypeptide: UPF0306 protein ESA_03544 (144 aa).

This sequence belongs to the UPF0306 family.

The sequence is that of UPF0306 protein ESA_03544 from Cronobacter sakazakii (strain ATCC BAA-894) (Enterobacter sakazakii).